The primary structure comprises 393 residues: NAD(P)H-quinone oxidoreductase subunit H, chloroplastic (393 aa).

Belongs to the complex I 49 kDa subunit family. In terms of assembly, NDH is composed of at least 16 different subunits, 5 of which are encoded in the nucleus.

It localises to the plastid. It is found in the chloroplast thylakoid membrane. The catalysed reaction is a plastoquinone + NADH + (n+1) H(+)(in) = a plastoquinol + NAD(+) + n H(+)(out). The enzyme catalyses a plastoquinone + NADPH + (n+1) H(+)(in) = a plastoquinol + NADP(+) + n H(+)(out). In terms of biological role, NDH shuttles electrons from NAD(P)H:plastoquinone, via FMN and iron-sulfur (Fe-S) centers, to quinones in the photosynthetic chain and possibly in a chloroplast respiratory chain. The immediate electron acceptor for the enzyme in this species is believed to be plastoquinone. Couples the redox reaction to proton translocation, and thus conserves the redox energy in a proton gradient. The chain is NAD(P)H-quinone oxidoreductase subunit H, chloroplastic from Jasminum nudiflorum (Winter jasmine).